A 172-amino-acid chain; its full sequence is Endoribonuclease YbeY (172 aa).

The Zn(2+) site is built by His-124, His-128, and His-134.

This sequence belongs to the endoribonuclease YbeY family. It depends on Zn(2+) as a cofactor.

It is found in the cytoplasm. Functionally, single strand-specific metallo-endoribonuclease involved in late-stage 70S ribosome quality control and in maturation of the 3' terminus of the 16S rRNA. This chain is Endoribonuclease YbeY, found in Rhodopseudomonas palustris (strain BisA53).